Reading from the N-terminus, the 473-residue chain is Probable glycine dehydrogenase (decarboxylating) subunit 2 (473 aa).

K266 carries the N6-(pyridoxal phosphate)lysine modification.

It belongs to the GcvP family. C-terminal subunit subfamily. In terms of assembly, the glycine cleavage system is composed of four proteins: P, T, L and H. In this organism, the P 'protein' is a heterodimer of two subunits. The cofactor is pyridoxal 5'-phosphate.

The enzyme catalyses N(6)-[(R)-lipoyl]-L-lysyl-[glycine-cleavage complex H protein] + glycine + H(+) = N(6)-[(R)-S(8)-aminomethyldihydrolipoyl]-L-lysyl-[glycine-cleavage complex H protein] + CO2. The glycine cleavage system catalyzes the degradation of glycine. The P protein binds the alpha-amino group of glycine through its pyridoxal phosphate cofactor; CO(2) is released and the remaining methylamine moiety is then transferred to the lipoamide cofactor of the H protein. This is Probable glycine dehydrogenase (decarboxylating) subunit 2 from Thermus thermophilus (strain ATCC BAA-163 / DSM 7039 / HB27).